The chain runs to 912 residues: Phosphoenolpyruvate carboxylase (912 aa).

Active-site residues include His-138 and Lys-575.

Belongs to the PEPCase type 1 family. Mg(2+) serves as cofactor.

It catalyses the reaction oxaloacetate + phosphate = phosphoenolpyruvate + hydrogencarbonate. Functionally, forms oxaloacetate, a four-carbon dicarboxylic acid source for the tricarboxylic acid cycle. This Lactobacillus acidophilus (strain ATCC 700396 / NCK56 / N2 / NCFM) protein is Phosphoenolpyruvate carboxylase.